Here is a 1772-residue protein sequence, read N- to C-terminus: Merozoite surface protein 1 (1772 aa).

The first 18 residues, 1-18 (MKVIGLLFSFVFFAIKCK), serve as a signal peptide directing secretion. Asn54 is a glycosylation site (N-linked (GlcNAc...) asparagine). The disordered stretch occupies residues 290–319 (TGGQSSTEPGSGGSSASGTSSSGQASAGTG). The span at 305-319 (ASGTSSSGQASAGTG) shows a compositional bias: low complexity. N-linked (GlcNAc...) asparagine glycans are attached at residues Asn406 and Asn646. The disordered stretch occupies residues 703–796 (KERMEQGPAI…QPSQAASSTT (94 aa)). Over residues 724–796 (SAESSTDRST…QPSQAASSTT (73 aa)) the composition is skewed to low complexity. An N-linked (GlcNAc...) asparagine glycan is attached at Asn829. The interval 924–1070 (AAPTPVTPAA…SRAESEEDMP (147 aa)) is disordered. Composition is skewed to low complexity over residues 930–946 (TPAA…PDVQ) and 956–1052 (SQQP…NSQS). N-linked (GlcNAc...) asparagine glycans are attached at residues Asn1018 and Asn1090. Residues 1362–1383 (GAVPGSGTDTRVAGSSVDDNED) are disordered. 4 N-linked (GlcNAc...) asparagine glycosylation sites follow: Asn1408, Asn1446, Asn1541, and Asn1629. EGF-like domains follow at residues 1661-1703 (HVCV…VENN) and 1704-1752 (NPTC…FCSS). Cys1663 and Cys1675 are joined by a disulfide. Asn1680 is a glycosylation site (N-linked (GlcNAc...) asparagine). Disulfide bonds link Cys1687–Cys1699, Cys1707–Cys1720, Cys1714–Cys1734, and Cys1736–Cys1750. Residue Ser1751 is the site of GPI-anchor amidated serine attachment. Positions 1752–1772 (SSSFMGLSILLIITLIVFNIF) are cleaved as a propeptide — removed in mature form.

As to quaternary structure, forms a complex composed of subunits p83, p30, p38, and p42 which remain non-covalently associated; the complex is formed at the merozoite surface prior to egress from host erythrocytes. The p230 precursor is cleaved by SUB1 prior to merozoite egress into 4 subunits p83, p30, p38, and p42 which remain non-covalently associated. In a second processing step during erythrocyte invasion, p42 is cleaved by SUB2 into p33 and p19; the latter remains attached to the merozoite surface via its GPI-anchor and stays on the surface during the subsequent ring stage.

The protein resides in the cell membrane. It localises to the secreted. In terms of biological role, during the asexual blood stage, involved in merozoite egress from host erythrocytes possibly via its interaction with the host cytoskeleton protein spectrin resulting in the destabilization of the host cytoskeleton and thus leading to erythrocyte cell membrane rupture. Involved in the binding to host erythrocytes and is required for host erythrocyte invasion. The polypeptide is Merozoite surface protein 1 (Plasmodium yoelii yoelii).